Reading from the N-terminus, the 179-residue chain is Inner membrane-spanning protein YciB (179 aa).

5 helical membrane-spanning segments follow: residues 22–42, 50–70, 76–96, 121–141, and 149–169; these read IYAA…YSWV, MALI…FFHN, WKVT…QWVM, LAWA…AFWL, and FKVF…GIYI.

The protein belongs to the YciB family.

The protein localises to the cell inner membrane. Its function is as follows. Plays a role in cell envelope biogenesis, maintenance of cell envelope integrity and membrane homeostasis. The polypeptide is Inner membrane-spanning protein YciB (Klebsiella pneumoniae subsp. pneumoniae (strain ATCC 700721 / MGH 78578)).